Consider the following 156-residue polypeptide: Small ribosomal subunit protein uS7 (156 aa).

It belongs to the universal ribosomal protein uS7 family. In terms of assembly, part of the 30S ribosomal subunit. Contacts proteins S9 and S11.

In terms of biological role, one of the primary rRNA binding proteins, it binds directly to 16S rRNA where it nucleates assembly of the head domain of the 30S subunit. Is located at the subunit interface close to the decoding center, probably blocks exit of the E-site tRNA. This is Small ribosomal subunit protein uS7 from Nitratidesulfovibrio vulgaris (strain DSM 19637 / Miyazaki F) (Desulfovibrio vulgaris).